Reading from the N-terminus, the 155-residue chain is Ribonuclease H (155 aa).

An RNase H type-1 domain is found at 1–142 (MTKQVEIFTD…CDELARAAAM (142 aa)). Asp10, Glu48, Asp70, and Asp134 together coordinate Mg(2+).

This sequence belongs to the RNase H family. In terms of assembly, monomer. Mg(2+) serves as cofactor.

It is found in the cytoplasm. It carries out the reaction Endonucleolytic cleavage to 5'-phosphomonoester.. Functionally, endonuclease that specifically degrades the RNA of RNA-DNA hybrids. The protein is Ribonuclease H of Enterobacter sp. (strain 638).